A 518-amino-acid chain; its full sequence is Chromosomal replication initiator protein DnaA (518 aa).

The tract at residues M1–P72 is domain I, interacts with DnaA modulators. A domain II region spans residues P72–S181. The segment at A155–Y178 is disordered. Positions K182–S398 are domain III, AAA+ region. Residues G226, G228, K229, and T230 each coordinate ATP. Residues K399–G518 form a domain IV, binds dsDNA region.

Belongs to the DnaA family. In terms of assembly, oligomerizes as a right-handed, spiral filament on DNA at oriC.

The protein localises to the cytoplasm. Its function is as follows. Plays an essential role in the initiation and regulation of chromosomal replication. ATP-DnaA binds to the origin of replication (oriC) to initiate formation of the DNA replication initiation complex once per cell cycle. Binds the DnaA box (a 9 base pair repeat at the origin) and separates the double-stranded (ds)DNA. Forms a right-handed helical filament on oriC DNA; dsDNA binds to the exterior of the filament while single-stranded (ss)DNA is stabiized in the filament's interior. The ATP-DnaA-oriC complex binds and stabilizes one strand of the AT-rich DNA unwinding element (DUE), permitting loading of DNA polymerase. After initiation quickly degrades to an ADP-DnaA complex that is not apt for DNA replication. Binds acidic phospholipids. The sequence is that of Chromosomal replication initiator protein DnaA from Paraburkholderia phymatum (strain DSM 17167 / CIP 108236 / LMG 21445 / STM815) (Burkholderia phymatum).